Reading from the N-terminus, the 247-residue chain is Probable transcriptional regulatory protein Syncc9605_2132 (247 aa).

It belongs to the TACO1 family.

Its subcellular location is the cytoplasm. This chain is Probable transcriptional regulatory protein Syncc9605_2132, found in Synechococcus sp. (strain CC9605).